Consider the following 430-residue polypeptide: Resistance to inhibitors of cholinesterase protein 19 (430 aa).

Residues 56–260 (ASDNELDTCL…TSRAFETLAE (205 aa)) enclose the AH domain. Residues 279-342 (GTKPERERKS…SPLIEDVDDE (64 aa)) are disordered. Positions 281–294 (KPERERKSEKEESA) are enriched in basic and acidic residues.

In terms of assembly, interacts with the GTPase activator protein tbc-8; the interaction is direct and may be required for the activation of rab-2 and dense vesicle maturation in cholinergic motoneurons. Interacts with rund-1. Expressed in all neurons. Highly expressed in m2 pharyngeal neurons and some pharyngeal interneurons. Also expressed in the excretory canal and the gland cells located just below the nerve ring in the head.

It localises to the cytoplasm. Its subcellular location is the cytoplasmic vesicle membrane. Functionally, may be involved in neurotransmitter secretion. In association with the GTPase activator protein tbc-8 activates rab-2 during dense core vesicle maturation in cholinergic motoneurons. This chain is Resistance to inhibitors of cholinesterase protein 19, found in Caenorhabditis elegans.